The following is a 175-amino-acid chain: Protein LHCP TRANSLOCATION DEFECT (175 aa).

The transit peptide at 1–68 (MASSSISFSC…WFKFGKNGVD (68 aa)) directs the protein to the chloroplast. One copy of the ANK repeat lies at 117–149 (PVDILLMLAATEGDRPKIEELLKAGADYSVKDA).

In terms of assembly, interacts with CAO/cpSRP43, but is not a component of the transit complex. Interacts with LHCP (via T14 domain), TIC40 and TIC110. In terms of tissue distribution, highly expressed in leaves and seedlings. Detected in roots, but not in germinating seeds.

The protein resides in the plastid. It is found in the chloroplast thylakoid membrane. It localises to the chloroplast envelope. Its subcellular location is the chloroplast stroma. In terms of biological role, involved in the import of light-harvesting complex proteins (LHCP) and subsequent routing of these proteins to the chloroplast signal recognition particle (SRP) pathway. The polypeptide is Protein LHCP TRANSLOCATION DEFECT (LTD) (Arabidopsis thaliana (Mouse-ear cress)).